The chain runs to 137 residues: Putative pre-16S rRNA nuclease (137 aa).

Belongs to the YqgF nuclease family.

It is found in the cytoplasm. In terms of biological role, could be a nuclease involved in processing of the 5'-end of pre-16S rRNA. In Actinobacillus pleuropneumoniae serotype 5b (strain L20), this protein is Putative pre-16S rRNA nuclease.